The sequence spans 827 residues: SH3-containing GRB2-like protein 3-interacting protein 1 (827 aa).

Disordered stretches follow at residues 1–115 (MMEG…ESHK), 142–205 (SIGN…GPPL), and 223–278 (IWGS…QAAT). Basic and acidic residues-rich tracts occupy residues 16–32 (RKKEKDTDSTGSPDRDG) and 40–54 (PPYHSKAECAREGGK). Phosphoserine occurs at positions 78, 104, 105, 107, 149, 151, 156, and 169. Phosphothreonine is present on residues Thr180 and Thr182. At Ser236 the chain carries Phosphoserine. Residues 245–260 (TGTPPPLPPKAVPATP) show a composition bias toward pro residues. Phosphothreonine occurs at positions 247 and 259. A phosphoserine mark is found at Ser265, Ser287, Ser289, Ser300, Ser316, and Ser319. Positions 265–276 (SPLTVATGNDQA) are enriched in polar residues. A compositionally biased stretch (basic and acidic residues) spans 314 to 333 (HFSDASPEHVTPELTPREKV). Residues 314 to 523 (HFSDASPEHV…LSAATTPTVE (210 aa)) form a disordered region. Phosphothreonine occurs at positions 324, 328, and 335. The segment covering 336–345 (PPAASDIPAD) has biased composition (low complexity). Positions 346 to 369 (SPAPGPPGPPGSAGPPGPPGPRHV) are enriched in pro residues. Ser371 is modified (phosphoserine). Residues 377–392 (EVQKKVAEQTFIKDDY) are compositionally biased toward basic and acidic residues. Ser398 carries the post-translational modification Phosphoserine. Thr409 carries the phosphothreonine modification. Residues 436–455 (ASGASSPARPATPLVPCSST) are compositionally biased toward low complexity. Positions 456–474 (TPPPPPPRPPSRPKLPPGK) are enriched in pro residues. 2 stretches are compositionally biased toward low complexity: residues 481-491 (SRPFSPPIHSS) and 498-521 (PLARAESTSSISSTNSLSAATTPT). Ser485 carries the post-translational modification Phosphoserine. The 269-residue stretch at 558 to 826 (TLPVAAAFTE…RFAAGKYLAD (269 aa)) folds into the MHD domain. 4 interaction with DPF motifs-containing proteins regions span residues 560–566 (PVAAAFT), 592–594 (SFP), 666–669 (TYYN), and 812–817 (SLIKKR). Positions 648 to 827 (MPNLMTHLKK…FAAGKYLADN (180 aa)) are necessary and sufficient to mediate interaction with CANX.

In terms of assembly, interacts with proteins essential or regulating the formation of functional clathrin-coated pits. Interacts with CANX. Interacts with AP2A1. Interacts with EPS15. Interacts with SH3GL3. Interacts with AMPH. Interacts with ITSN1 (via SH3 domains). Interacts with and REPS1. As to expression, specifically expressed in brain (at protein level).

It is found in the membrane. The protein localises to the clathrin-coated pit. Functionally, may function in clathrin-mediated endocytosis. Has both a membrane binding/tubulating activity and the ability to recruit proteins essential to the formation of functional clathrin-coated pits. Has a preference for membranes enriched in phosphatidylserine and phosphoinositides and is required for the endocytosis of the transferrin receptor. May also bind tubulin. May play a role in the regulation of energy homeostasis. This is SH3-containing GRB2-like protein 3-interacting protein 1 (Sgip1) from Rattus norvegicus (Rat).